The chain runs to 762 residues: MELEEQKKYFHGTLEITIFDATPFSPPFPFNCICTKPKAAYVTIKINKKKVAKTSSEYDRIWNQTFQILCAHPVTDTTITITLKTRCSVLGRFRISAEQILTSNSAVINGFFPLIADNGSTKRNLKLKCLMWFRPAYLEPGWCRALEEASFQGIRNASFPQRSNCRVVLYQDAHHKATFDPRVDDVPFNARNLWEDVYKAIESARHLVYIAGWALNPNLVLVRDNETEIPHAVGVTVGELLKRKSEEGVAVRVMLWNDETSLPMIKNKGVMRTNVERALAYFRNTNVVCRLCPRLHKKLPTAFAHHQKTITLDTRVTNSSTKEREIMSFLGGFDLCDGRYDTEEHSLFRTLGTEADFYQTSVAGAKLSRGGPREPWHDCHVSVVGGAAWDVLKNFEQRWTKQCNPSVLVNTSGIRNLVNLTGPTEENNRKWNVQVLRSIDHISATEMPRGLPVEKSVHDGYVAAIRKAERFIYIENQYFMGSCDHWESKNDKICSGCTNLIPVEIALKIAAKIRARERFAVYIVIPMWPEGPPESETVEEILHWTRETMSMMYQIIGEAIWEVGDKSHPRDYLNFFCLANREEKRDGEFEAVSSPHQKTHYWNAQRNRRFMVYVHSKLMIVDDTYILIGSANINQRSMDGCRDTEIAIGCYQTNTNNTNEIQAYRLSLWYEHTGGKITADDLSSSEPESLECVRGLRTIGEQMWEIYSGDKVVDMLGIHLVAYPISVTGDGAVEEVGDGCFPDTKTLVKGKRSKMFPPVLTT.

The region spanning methionine 1–alanine 116 is the C2 domain. Aspartate 172 contacts Ca(2+). A PLD phosphodiesterase 1 domain is found at threonine 301–arginine 339. Catalysis depends on residues histidine 306, lysine 308, and aspartate 313. Histidine 306 is an a 1,2-diacyl-sn-glycero-3-phosphate binding site. Ca(2+)-binding residues include histidine 345 and histidine 377. 2 residues coordinate a 1,2-diacyl-sn-glycero-3-phosphate: glutamine 477 and histidine 615. One can recognise a PLD phosphodiesterase 2 domain in the interval phenylalanine 610–serine 637. Catalysis depends on residues histidine 615, lysine 617, and aspartate 622. Position 671 (glutamate 671) interacts with Ca(2+).

It belongs to the phospholipase D family. C2-PLD subfamily. The cofactor is Ca(2+). In terms of tissue distribution, expressed in roots, leaves, stems, siliques,flowers and inflorescences.

The protein resides in the cell membrane. The catalysed reaction is a 1,2-diacyl-sn-glycero-3-phosphocholine + H2O = a 1,2-diacyl-sn-glycero-3-phosphate + choline + H(+). In terms of biological role, hydrolyzes glycerol-phospholipids at the terminal phosphodiesteric bond to generate phosphatidic acids (PA). Promotes growth and plays a role in nitrogen signaling. In Arabidopsis thaliana (Mouse-ear cress), this protein is Phospholipase D alpha 4.